Reading from the N-terminus, the 62-residue chain is Small ribosomal subunit protein uS14 (62 aa).

Residues C25, C28, C41, and C44 each contribute to the Zn(2+) site.

Belongs to the universal ribosomal protein uS14 family. Zinc-binding uS14 subfamily. Part of the 30S ribosomal subunit. Contacts proteins S3 and S10. It depends on Zn(2+) as a cofactor.

In terms of biological role, binds 16S rRNA, required for the assembly of 30S particles and may also be responsible for determining the conformation of the 16S rRNA at the A site. In Hydrogenobaculum sp. (strain Y04AAS1), this protein is Small ribosomal subunit protein uS14.